Here is a 209-residue protein sequence, read N- to C-terminus: Protein-L-isoaspartate O-methyltransferase (209 aa).

The active site involves Ser59.

It belongs to the methyltransferase superfamily. L-isoaspartyl/D-aspartyl protein methyltransferase family. As to quaternary structure, monomer.

The protein resides in the cytoplasm. The enzyme catalyses [protein]-L-isoaspartate + S-adenosyl-L-methionine = [protein]-L-isoaspartate alpha-methyl ester + S-adenosyl-L-homocysteine. Functionally, catalyzes the methyl esterification of L-isoaspartyl residues in peptides and proteins that result from spontaneous decomposition of normal L-aspartyl and L-asparaginyl residues. It plays a role in the repair and/or degradation of damaged proteins. In Helicobacter pylori (strain J99 / ATCC 700824) (Campylobacter pylori J99), this protein is Protein-L-isoaspartate O-methyltransferase (pcm).